A 61-amino-acid polypeptide reads, in one-letter code: Large ribosomal subunit protein bL28 (61 aa).

The protein belongs to the bacterial ribosomal protein bL28 family.

This chain is Large ribosomal subunit protein bL28, found in Geobacillus sp. (strain WCH70).